Consider the following 404-residue polypeptide: Coenzyme F(430) synthetase (404 aa).

112–117 contributes to the ATP binding site; it reads GVKGKT.

Belongs to the MurCDEF family.

The enzyme catalyses 15,17(3)-seco-F430-17(3)-acid + ATP = coenzyme F430 + ADP + phosphate. Involved in the biosynthesis of the unique nickel-containing tetrapyrrole coenzyme F430, the prosthetic group of methyl-coenzyme M reductase (MCR), which plays a key role in methanogenesis and anaerobic methane oxidation. Catalyzes the activation the g-propionate side chain of 15,17(3)-seco-F430-17(3)-acid (seco-F430) for intramolecular C-C bond formation to yield the carbocyclic F ring of coenzyme F430. The protein is Coenzyme F(430) synthetase of Methanocaldococcus jannaschii (strain ATCC 43067 / DSM 2661 / JAL-1 / JCM 10045 / NBRC 100440) (Methanococcus jannaschii).